Here is a 294-residue protein sequence, read N- to C-terminus: Potassium-transporting ATPase subunit beta (294 aa).

The Cytoplasmic segment spans residues 1-36; it reads MAALQEKKSCSQRMAEFRQYCWNPDTGQMLGRTPAR. A helical; Signal-anchor for type II membrane protein transmembrane segment spans residues 37 to 57; it reads WVWISLYYAAFYVVMTGLFAL. At 58–294 the chain is on the extracellular side; that stretch reads CIYVLMQTID…KVEFKLTIQK (237 aa). N-linked (GlcNAc...) asparagine glycosylation is found at Asn-99, Asn-103, Asn-130, Asn-146, and Asn-161. An intrachain disulfide couples Cys-131 to Cys-152. Cysteines 162 and 178 form a disulfide. 2 N-linked (GlcNAc...) asparagine glycosylation sites follow: Asn-193 and Asn-225. The segment at 194–294 is immunoglobulin-like; it reads NTAPRVDCTF…KVEFKLTIQK (101 aa). A disulfide bridge links Cys-201 with Cys-266.

This sequence belongs to the X(+)/potassium ATPases subunit beta family. In terms of assembly, the ATPase pump is composed of two subunits: alpha (catalytic) and beta (regulatory). Interacts with alpha subunit ATP12A; this interaction is required for the formation of a functionally active pump and targeting at the plasma membrane. Interacts (via N-terminus) with alpha subunit ATP4A (via the P-domain). N-glycosylation is necessary for assembly and functional expression of the pump at the plasma membrane. In terms of tissue distribution, stomach.

Its subcellular location is the apical cell membrane. The protein localises to the cell membrane. The beta subunit of the gastric H(+)/K(+) ATPase pump which transports H(+) ions in exchange for K(+) ions across the apical membrane of parietal cells. Plays a structural and regulatory role in the assembly and membrane targeting of a functionally active pump. Within a transport cycle, the transfer of a H(+) ion across the membrane is coupled to ATP hydrolysis and is associated with a transient phosphorylation of the alpha subunit that shifts the pump conformation from inward-facing (E1) to outward-facing state (E2). Interacts with the phosphorylation domain of the alpha subunit and functions as a ratchet, stabilizing the lumenal-open E2 conformation and preventing the reverse reaction of the transport cycle. The protein is Potassium-transporting ATPase subunit beta (Atp4b) of Rattus norvegicus (Rat).